Consider the following 106-residue polypeptide: U1-lycotoxin-Ls1b (106 aa).

An N-terminal signal peptide occupies residues 1–19 (MKVLVVVALLVTLISYSSS). A propeptide spanning residues 20-40 (EGIDDLEADELLSLMANEQTR) is cleaved from the precursor. 4 disulfides stabilise this stretch: C43–C58, C50–C67, C57–C85, and C69–C83.

This sequence belongs to the neurotoxin 19 (CSTX) family. 04 (U1-Lctx) subfamily. Expressed by the venom gland.

The protein resides in the secreted. The protein is U1-lycotoxin-Ls1b of Lycosa singoriensis (Wolf spider).